Here is a 274-residue protein sequence, read N- to C-terminus: Formamidopyrimidine-DNA glycosylase (274 aa).

P2 acts as the Schiff-base intermediate with DNA in catalysis. The active-site Proton donor is the E3. Catalysis depends on K58, which acts as the Proton donor; for beta-elimination activity. DNA-binding residues include H91, R110, and K152. An FPG-type zinc finger spans residues 237 to 271 (KVYGRKNLPCLVCENKIETVVIAGRHSAFCPHCQP). R261 functions as the Proton donor; for delta-elimination activity in the catalytic mechanism.

This sequence belongs to the FPG family. In terms of assembly, monomer. Zn(2+) serves as cofactor.

It carries out the reaction Hydrolysis of DNA containing ring-opened 7-methylguanine residues, releasing 2,6-diamino-4-hydroxy-5-(N-methyl)formamidopyrimidine.. The catalysed reaction is 2'-deoxyribonucleotide-(2'-deoxyribose 5'-phosphate)-2'-deoxyribonucleotide-DNA = a 3'-end 2'-deoxyribonucleotide-(2,3-dehydro-2,3-deoxyribose 5'-phosphate)-DNA + a 5'-end 5'-phospho-2'-deoxyribonucleoside-DNA + H(+). Functionally, involved in base excision repair of DNA damaged by oxidation or by mutagenic agents. Acts as a DNA glycosylase that recognizes and removes damaged bases. Has a preference for oxidized purines, such as 7,8-dihydro-8-oxoguanine (8-oxoG). Has AP (apurinic/apyrimidinic) lyase activity and introduces nicks in the DNA strand. Cleaves the DNA backbone by beta-delta elimination to generate a single-strand break at the site of the removed base with both 3'- and 5'-phosphates. The chain is Formamidopyrimidine-DNA glycosylase from Legionella pneumophila (strain Lens).